The following is a 393-amino-acid chain: Chalcone synthase G (393 aa).

Cysteine 164 is an active-site residue.

This sequence belongs to the thiolase-like superfamily. Chalcone/stilbene synthases family. In terms of tissue distribution, expressed in seedlings after illumination with UV light. No expression detectable in flowers. It is not known for sure whether CHSG encodes a chalcone synthase or a very closely related condensing enzyme.

It carries out the reaction (E)-4-coumaroyl-CoA + 3 malonyl-CoA + 3 H(+) = 2',4,4',6'-tetrahydroxychalcone + 3 CO2 + 4 CoA. It functions in the pathway secondary metabolite biosynthesis; flavonoid biosynthesis. The primary product of this enzyme is 4,2',4',6'-tetrahydroxychalcone (also termed naringenin-chalcone or chalcone) which can under specific conditions spontaneously isomerize into naringenin. This chain is Chalcone synthase G (CHSG), found in Petunia hybrida (Petunia).